The sequence spans 295 residues: uncharacterized protein (295 aa).

The HTH lysR-type domain maps to 1-58 (MESGDLRVFQMVAREGTITKAALQLGYVQSNVTARIQQLEAELGTTLFLRHNRGMTLS). A DNA-binding region (H-T-H motif) is located at residues 18–37 (ITKAALQLGYVQSNVTARIQ).

This sequence belongs to the LysR transcriptional regulatory family.

This is an uncharacterized protein from Bacillus subtilis (strain 168).